The chain runs to 86 residues: Large ribosomal subunit protein bL27 (86 aa).

A disordered region spans residues M1 to S26.

Belongs to the bacterial ribosomal protein bL27 family.

The polypeptide is Large ribosomal subunit protein bL27 (Rickettsia canadensis (strain McKiel)).